We begin with the raw amino-acid sequence, 102 residues long: Small ribosomal subunit protein uS10 (102 aa).

Belongs to the universal ribosomal protein uS10 family. Part of the 30S ribosomal subunit.

Its function is as follows. Involved in the binding of tRNA to the ribosomes. This Methanosarcina mazei (strain ATCC BAA-159 / DSM 3647 / Goe1 / Go1 / JCM 11833 / OCM 88) (Methanosarcina frisia) protein is Small ribosomal subunit protein uS10.